Consider the following 479-residue polypeptide: Rifampicin monooxygenase (479 aa).

T12, D31, K32, R41, Q98, V122, T156, D278, L291, and N292 together coordinate FAD.

The protein belongs to the rifampicin monooxygenase family. It depends on FAD as a cofactor.

The catalysed reaction is rifampicin + NADPH + O2 = rifampicin para-naphthoquinone carboxamide + NADP(+) + H2O + H(+). It catalyses the reaction rifampicin + NADH + O2 = rifampicin para-naphthoquinone carboxamide + NAD(+) + H2O + H(+). Its function is as follows. Monooxygenase that can modify rifampicin, thereby inactivating its antibiotic activity. In Rhodococcus hoagii (Corynebacterium equii), this protein is Rifampicin monooxygenase.